The sequence spans 456 residues: MNSLKISDNEYALIEHPGFANNKDAFFQTLGGVQSIQKACQTSFQNPKQALLELNLRPKDKYHHPVQARVQSRNDLLVTIKKMDNSVQNVSRIRQVFLFRDMADFQYSTQNSPFVQKLDSTLRVLDYNAINKFSIDLTPVQRKHVDMPPPPVFSQTSLPMSYNFLQNPLVGRVRLPNGKTTIVNLKGQCRVWIITTNMGVESVPTCRHSKLGEPSKTIQEVIEALKPLFEKRPVWTRRALLNHLDPSYTHYLKFALPYLSYLWTSGPFRDTYTRFGYDPRKDSNAAAYQALFFKLKLNGKHKGTKTHVFDGKTLFPTNRVYQVCDIVDPTIAPLLKDTQLRSECHRDTGWYRSGRYYKVRDLMREKLFALIEGEMPSEVAVNMILNAEEVEESDRYSNFDEQDNTDLNDTVRGLNTSATDDRINDLMRNLMKRSQEHEGFEDLEEIDDDYDDIFGD.

Disordered stretches follow at residues 394–416 and 437–456; these read DRYSNFDEQDNTDLNDTVRGLNT and HEGFEDLEEIDDDYDDIFGD. Over residues 407 to 416 the composition is skewed to polar residues; the sequence is LNDTVRGLNT. Residues 441 to 456 show a composition bias toward acidic residues; it reads EDLEEIDDDYDDIFGD.

As to quaternary structure, component of the TFIIIC complex including sfc1, sfc3, sfc4, sfc6 and sfc7. The subunits are organized in two globular domains, tauA and tauB, connected by a proteolysis-sensitive and flexible linker. Interacts with sfc3, sfc4 and sfc6. Phosphorylated.

The protein resides in the nucleus. Its function is as follows. TFIIIC mediates tRNA and 5S RNA gene activation by binding to intragenic promoter elements. Upstream of the transcription start site, TFIIIC assembles the initiation complex TFIIIB-TFIIIC-tDNA, which is sufficient for RNA polymerase III recruitment and function. Part of the tauA domain of TFIIIC that binds boxA DNA promoter sites of tRNA and similar genes. Participates in the interconnection of tauA with tauB via its contacts with sfc3 and sfc6. Serves as a scaffold critical for tauA-DNA spatial configuration and tauB-DNA stability. Localizes to chromatin insulator sequence without recruiting RNA polymerase III and plays a role in nuclear organization. This is Transcription factor tau subunit sfc1 (sfc1) from Schizosaccharomyces pombe (strain 972 / ATCC 24843) (Fission yeast).